A 264-amino-acid polypeptide reads, in one-letter code: MTSSIKSDAPQFLLDLDNCSSLPPTPPKTASPGNSKMKGFNISDLCLDLDSSTSSSCSVSPASSFHTRSESVGQQQSGRNSPVSSSTESPTKRPKYSYNALIAMAIQSSPFKSLRVSEIYKYISSNFSYYKNQKPLQWQNSVRHNLSLHKEFRKVRTLDGKGSYWAMTADLGTDVYISNNCGKLRRQKSKVAKFPPMQQHFPIPQLPTQNIHQLCMQNPQILATLLQNMYLQNMQNLQNIPMVPGFPIIPVPINPTSFHFPKSS.

Disordered regions lie at residues 15–36 (DLDNCSSLPPTPPKTASPGNSK) and 50–93 (DSST…PTKR). Low complexity predominate over residues 50 to 64 (DSSTSSSCSVSPASS). Polar residues predominate over residues 70 to 89 (ESVGQQQSGRNSPVSSSTES). The segment at residues 93 to 186 (RPKYSYNALI…ISNNCGKLRR (94 aa)) is a DNA-binding region (fork-head).

Its subcellular location is the nucleus. It is found in the cytoplasm. Functionally, transcription factor. Plays a role in embryogenesis and later development, perhaps acting redundantly with forkhead protein fkh-2. The protein is Forkhead box protein pes-1 of Caenorhabditis elegans.